The chain runs to 219 residues: MOB kinase activator-like 1 (219 aa).

Zn(2+)-binding residues include cysteine 79, cysteine 84, histidine 161, and histidine 166.

It belongs to the MOB1/phocein family. Interacts with and activates trc and wts. Phosphorylated by wts/mats kinase complex. Activated by phosphorylation by Hippo (Hpo) kinase which increases its affinity and its ability to activate Warts (Wts) kinase. In terms of tissue distribution, ubiquitously expressed at low levels in developing tissues (at protein level).

The protein resides in the cytoplasm. Its subcellular location is the cytoskeleton. The protein localises to the microtubule organizing center. It is found in the centrosome. It localises to the nucleus. The protein resides in the cytosol. Its subcellular location is the cell membrane. In terms of biological role, coactivator of Warts (Wts) kinase in the Hippo/SWH (Sav/Wts/Hpo)signaling pathway, a signaling pathway that plays a pivotal role in organ size control and tumor suppression by restricting proliferation and promoting apoptosis. The core of this pathway is composed of a kinase cascade wherein Hippo (Hpo), in complex with its regulatory protein Salvador (Sav), phosphorylates and activates Warts (Wts) in complex with its regulatory protein Mats, which in turn phosphorylates and inactivates the Yorkie (Yki)oncoprotein. The Hippo/SWH signaling pathway inhibits the activity of the transcriptional complex formed by Scalloped (sd) and Yki and the target genes of this pathway include cyclin-E (cycE), diap1 and bantam. Mats is essential for early development and is required for proper chromosomal segregation in developing embryos. This chain is MOB kinase activator-like 1, found in Drosophila melanogaster (Fruit fly).